The primary structure comprises 205 residues: Dephospho-CoA kinase (205 aa).

Positions 6 to 205 (RIGLTGGIAA…EIYAGWCAGR (200 aa)) constitute a DPCK domain. An ATP-binding site is contributed by 14 to 19 (AAGKST).

It belongs to the CoaE family.

It is found in the cytoplasm. It catalyses the reaction 3'-dephospho-CoA + ATP = ADP + CoA + H(+). Its pathway is cofactor biosynthesis; coenzyme A biosynthesis; CoA from (R)-pantothenate: step 5/5. In terms of biological role, catalyzes the phosphorylation of the 3'-hydroxyl group of dephosphocoenzyme A to form coenzyme A. This Bifidobacterium longum (strain NCC 2705) protein is Dephospho-CoA kinase.